The chain runs to 368 residues: Lipoyl synthase, chloroplastic (368 aa).

2 disordered regions span residues 1 to 30 (MQSSLARPLRPPVLAGCGGRRGHGAPRGSV) and 42 to 61 (PTVGTASRAPAGPYTGRDPE). [4Fe-4S] cluster is bound by residues cysteine 94, cysteine 99, cysteine 105, cysteine 131, cysteine 135, cysteine 138, and serine 346. The region spanning 114–335 (GEGDGIATAT…KEYGESVGFR (222 aa)) is the Radical SAM core domain.

It belongs to the radical SAM superfamily. Lipoyl synthase family. It depends on [4Fe-4S] cluster as a cofactor.

Its subcellular location is the plastid. The protein localises to the chloroplast. It catalyses the reaction [[Fe-S] cluster scaffold protein carrying a second [4Fe-4S](2+) cluster] + N(6)-octanoyl-L-lysyl-[protein] + 2 oxidized [2Fe-2S]-[ferredoxin] + 2 S-adenosyl-L-methionine + 4 H(+) = [[Fe-S] cluster scaffold protein] + N(6)-[(R)-dihydrolipoyl]-L-lysyl-[protein] + 4 Fe(3+) + 2 hydrogen sulfide + 2 5'-deoxyadenosine + 2 L-methionine + 2 reduced [2Fe-2S]-[ferredoxin]. Its pathway is protein modification; protein lipoylation via endogenous pathway; protein N(6)-(lipoyl)lysine from octanoyl-[acyl-carrier-protein]: step 2/2. Functionally, catalyzes the radical-mediated insertion of two sulfur atoms into the C-6 and C-8 positions of the octanoyl moiety bound to the lipoyl domains of lipoate-dependent enzymes, thereby converting the octanoylated domains into lipoylated derivatives. This Sorghum bicolor (Sorghum) protein is Lipoyl synthase, chloroplastic.